Consider the following 365-residue polypeptide: 2-aminoethylphosphonate--pyruvate transaminase (365 aa).

Position 194 is an N6-(pyridoxal phosphate)lysine (K194).

This sequence belongs to the class-V pyridoxal-phosphate-dependent aminotransferase family. PhnW subfamily. As to quaternary structure, homodimer. It depends on pyridoxal 5'-phosphate as a cofactor.

It carries out the reaction (2-aminoethyl)phosphonate + pyruvate = phosphonoacetaldehyde + L-alanine. In terms of biological role, involved in phosphonate degradation. The polypeptide is 2-aminoethylphosphonate--pyruvate transaminase (Bacillus mycoides (strain KBAB4) (Bacillus weihenstephanensis)).